Here is a 64-residue protein sequence, read N- to C-terminus: Large ribosomal subunit protein uL30 (64 aa).

The protein belongs to the universal ribosomal protein uL30 family. In terms of assembly, part of the 50S ribosomal subunit.

This Bradyrhizobium diazoefficiens (strain JCM 10833 / BCRC 13528 / IAM 13628 / NBRC 14792 / USDA 110) protein is Large ribosomal subunit protein uL30.